The primary structure comprises 902 residues: Probable dipeptidyl-aminopeptidase B (902 aa).

Disordered stretches follow at residues Met1–Asp23 and Asp53–Ser72. The Cytoplasmic portion of the chain corresponds to Met1–Gln78. Low complexity predominate over residues Thr7–Ser21. Residues Ile79–Leu99 traverse the membrane as a helical; Signal-anchor for type II membrane protein segment. Residues Thr100–His902 are Vacuolar-facing. N-linked (GlcNAc...) asparagine glycosylation is found at Asn335 and Asn626. The Charge relay system role is filled by Ser740. Residues Asn794 and Asn799 are each glycosylated (N-linked (GlcNAc...) asparagine). Active-site charge relay system residues include Asp817 and His850.

It belongs to the peptidase S9B family.

It is found in the vacuole membrane. The catalysed reaction is Release of an N-terminal dipeptide, Xaa-Yaa-|-Zaa-, from a polypeptide, preferentially when Yaa is Pro, provided Zaa is neither Pro nor hydroxyproline.. Functionally, type IV dipeptidyl-peptidase which removes N-terminal dipeptides sequentially from polypeptides having unsubstituted N-termini provided that the penultimate residue is proline. The sequence is that of Probable dipeptidyl-aminopeptidase B (dapB) from Aspergillus oryzae (strain ATCC 42149 / RIB 40) (Yellow koji mold).